Reading from the N-terminus, the 221-residue chain is Ribosomal RNA small subunit methyltransferase Nep1 (221 aa).

Residues Gly-174, Gly-179, and Leu-196–Met-201 contribute to the S-adenosyl-L-methionine site.

The protein belongs to the class IV-like SAM-binding methyltransferase superfamily. RNA methyltransferase NEP1 family. Homodimer.

The catalysed reaction is a pseudouridine in rRNA + S-adenosyl-L-methionine = an N(1)-methylpseudouridine in rRNA + S-adenosyl-L-homocysteine + H(+). In terms of biological role, methyltransferase involved in ribosomal biogenesis. Specifically catalyzes the N1-methylation of the pseudouridine corresponding to position 914 in M.jannaschii 16S rRNA. This is Ribosomal RNA small subunit methyltransferase Nep1 from Pyrobaculum arsenaticum (strain DSM 13514 / JCM 11321 / PZ6).